The chain runs to 536 residues: Austinoid biosynthesis cluster protein W (536 aa).

The N-terminal stretch at M1–A19 is a signal peptide. 5 disordered regions span residues G141–P164, S185–S220, F261–G302, P385–G423, and P491–E536. Residues S195–D208 are compositionally biased toward low complexity. Positions S209–S220 are enriched in gly residues. Composition is skewed to low complexity over residues A287 to G302 and A408 to G423.

It functions in the pathway secondary metabolite biosynthesis; terpenoid biosynthesis. Functionally, part of the gene cluster that mediates the biosynthesis of calidodehydroaustin, a fungal meroterpenoid. The first step of the pathway is the synthesis of 3,5-dimethylorsellinic acid by the polyketide synthase ausA. 3,5-dimethylorsellinic acid is then prenylated by the polyprenyl transferase ausN. Further epoxidation by the FAD-dependent monooxygenase ausM and cyclization by the probable terpene cyclase ausL lead to the formation of protoaustinoid A. Protoaustinoid A is then oxidized to spiro-lactone preaustinoid A3 by the combined action of the FAD-binding monooxygenases ausB and ausC, and the dioxygenase ausE. Acid-catalyzed keto-rearrangement and ring contraction of the tetraketide portion of preaustinoid A3 by ausJ lead to the formation of preaustinoid A4. The aldo-keto reductase ausK, with the help of ausH, is involved in the next step by transforming preaustinoid A4 into isoaustinone which is in turn hydroxylated by the P450 monooxygenase ausI to form austinolide. The cytochrome P450 monooxygenase ausG modifies austinolide to austinol. Austinol is further acetylated to austin by the O-acetyltransferase ausP, which spontaneously changes to dehydroaustin. The cytochrome P450 monooxygenase ausR then converts dehydroaustin is into 7-dehydrodehydroaustin. The hydroxylation catalyzed by ausR permits the O-acetyltransferase ausQ to add an additional acetyl group to the molecule, leading to the formation of acetoxydehydroaustin. The short chain dehydrogenase ausT catalyzes the reduction of the double bond present between carbon atoms 1 and 2 to convert 7-dehydrodehydroaustin into 1,2-dihydro-7-hydroxydehydroaustin. AusQ catalyzes not only an acetylation reaction but also the addition of the PKS ausV diketide product to 1,2-dihydro-7-hydroxydehydroaustin, forming precalidodehydroaustin. Finally, the iron/alpha-ketoglutarate-dependent dioxygenase converts precalidodehydroaustin into calidodehydroaustin. The chain is Austinoid biosynthesis cluster protein W from Aspergillus calidoustus.